Consider the following 48-residue polypeptide: ATP synthase protein 8 (48 aa).

The chain crosses the membrane as a helical span at residues 4 to 24 (LVPFFFVNQVVYAFVILTVLI).

Belongs to the ATPase protein 8 family. F-type ATPases have 2 components, CF(1) - the catalytic core - and CF(0) - the membrane proton channel.

It is found in the mitochondrion membrane. Functionally, mitochondrial membrane ATP synthase (F(1)F(0) ATP synthase or Complex V) produces ATP from ADP in the presence of a proton gradient across the membrane which is generated by electron transport complexes of the respiratory chain. F-type ATPases consist of two structural domains, F(1) - containing the extramembraneous catalytic core and F(0) - containing the membrane proton channel, linked together by a central stalk and a peripheral stalk. During catalysis, ATP synthesis in the catalytic domain of F(1) is coupled via a rotary mechanism of the central stalk subunits to proton translocation. Part of the complex F(0) domain. Minor subunit located with subunit a in the membrane. The polypeptide is ATP synthase protein 8 (atp8) (Aspergillus amstelodami).